A 420-amino-acid polypeptide reads, in one-letter code: MSLKERKSINECDLKGKKVLIRVDFNVPLDDGNITNDYRIRSALPAVQKVLTEGGSCVLMSHLGRPKGVSMAEGKELRSTGGIPGFEQKATLKPVAKALSELLSRPVTFAPDCLNAADVVSKMSPGDVVLLENVRFYKEEGSKSTEEREAMAKILASYGDVYISDAFGTAHRDSATMTGIPKILGHGAAGYLMEKEISYFAKVLGNPPRPLVAIVGGAKVSDKIQLLDNMLQRIDYLLIGGAMAYTFLKAQGYSIGISMCEESKLEFARSLLKKAEDRKVQVILPIDHVCHTEFKAVDSPLITEDQNIPEGHMALDIGPKTIEKYVQTIGKCKSAIWNGPMGVFEMVPYSKGTFAIAKAMGRGTHEHGLMSIIGGGESAGAAELCGEAARISHVSTGGGASLELLEGKTLPGVTVLDEKE.

(2R)-3-phosphoglycerate contacts are provided by valine 23, aspartate 24, phenylalanine 25, asparagine 26, arginine 39, serine 61, histidine 62, glycine 64, arginine 65, arginine 135, histidine 171, and arginine 172. Positions 217 and 218 each coordinate ADP. CDP is bound at residue glycine 217. AMP-binding residues include alanine 218 and lysine 219. Position 218 (alanine 218) interacts with ATP. Alanine 218 contacts Mg(2+). Lysine 219 contributes to the (2R)-3-phosphoglycerate binding site. Position 222 (aspartate 222) interacts with CDP. Aspartate 222 contributes to the Mg(2+) binding site. ADP contacts are provided by lysine 223 and glycine 241. Lysine 223 lines the AMP pocket. Position 223 (lysine 223) interacts with ATP. Position 241 (glycine 241) interacts with CDP. Residues alanine 242 and alanine 314 each coordinate AMP. Alanine 242 and alanine 314 together coordinate ATP. ADP is bound by residues alanine 314 and asparagine 338. Glycine 339 and phenylalanine 344 together coordinate CDP. The ADP site is built by phenylalanine 344, glutamate 345, glutamate 377, and serine 378. Position 345 (glutamate 345) interacts with AMP. Residues glutamate 345, glutamate 377, and serine 378 each contribute to the ATP site. Glutamate 377 lines the Mg(2+) pocket.

It belongs to the phosphoglycerate kinase family. In terms of assembly, monomer. Mg(2+) is required as a cofactor.

It localises to the cytoplasm. It carries out the reaction (2R)-3-phosphoglycerate + ATP = (2R)-3-phospho-glyceroyl phosphate + ADP. It functions in the pathway carbohydrate degradation; glycolysis; pyruvate from D-glyceraldehyde 3-phosphate: step 2/5. The chain is Phosphoglycerate kinase, cytosolic from Trypanosoma brucei brucei.